The primary structure comprises 135 residues: Small ribosomal subunit protein uS12 (135 aa).

A disordered region spans residues 1-29 (MPTINQLVRKGREKVEKKSKAPALQGNPQ). A 3-methylthioaspartic acid modification is found at Asp-89. The tract at residues 106 to 135 (GVKDRKQSRSKYGAKRPKPGQAAATTGKKK) is disordered. Positions 113–123 (SRSKYGAKRPK) are enriched in basic residues.

The protein belongs to the universal ribosomal protein uS12 family. As to quaternary structure, part of the 30S ribosomal subunit. Contacts proteins S8 and S17. May interact with IF1 in the 30S initiation complex.

In terms of biological role, with S4 and S5 plays an important role in translational accuracy. Functionally, interacts with and stabilizes bases of the 16S rRNA that are involved in tRNA selection in the A site and with the mRNA backbone. Located at the interface of the 30S and 50S subunits, it traverses the body of the 30S subunit contacting proteins on the other side and probably holding the rRNA structure together. The combined cluster of proteins S8, S12 and S17 appears to hold together the shoulder and platform of the 30S subunit. The chain is Small ribosomal subunit protein uS12 from Sulfurihydrogenibium sp. (strain YO3AOP1).